A 346-amino-acid polypeptide reads, in one-letter code: Heparan sulfate glucosamine 3-O-sulfotransferase 5 (346 aa).

The Cytoplasmic segment spans residues 1–12 (MLFKQQVWLRQK). A helical; Signal-anchor for type II membrane protein transmembrane segment spans residues 13 to 32 (LLVLGSLAVGSLLYLVARVG). Residues 33–346 (SLDRLQPICP…QITGRTLNWP (314 aa)) are Lumenal-facing. Asn-75 carries an N-linked (GlcNAc...) asparagine glycan. 3'-phosphoadenylyl sulfate is bound at residue 100–104 (KGGTR). Substrate contacts are provided by residues 122–128 (EIHFFDN) and 155–158 (KSPA). Asn-173 is a glycosylation site (N-linked (GlcNAc...) asparagine). 3'-phosphoadenylyl sulfate-binding residues include Arg-183 and Ser-191. N-linked (GlcNAc...) asparagine glycosylation occurs at Asn-204. 226–227 (YK) contributes to the substrate binding site. Asn-287 carries N-linked (GlcNAc...) asparagine glycosylation. Tyr-293 is a binding site for 3'-phosphoadenylyl sulfate. Cysteines 294 and 304 form a disulfide. Residue 309–313 (KGRIH) participates in 3'-phosphoadenylyl sulfate binding.

It belongs to the sulfotransferase 1 family.

The protein localises to the golgi apparatus membrane. The catalysed reaction is alpha-D-glucosaminyl-[heparan sulfate](n) + 3'-phosphoadenylyl sulfate = 3-sulfo-alpha-D-glucosaminyl-[heparan sulfate](n) + adenosine 3',5'-bisphosphate + H(+). Its function is as follows. Sulfotransferase that utilizes 3'-phospho-5'-adenylyl sulfate (PAPS) to catalyze the transfer of a sulfo group to position 3 of glucosamine residues in heparan. Catalyzes the rate limiting step in the biosynthesis of heparan sulfate (HSact). This modification is a crucial step in the biosynthesis of anticoagulant heparan sulfate as it completes the structure of the antithrombin pentasaccharide binding site. Also generates GlcUA-GlcNS or IdoUA-GlcNS and IdoUA2S-GlcNH2. The sequence is that of Heparan sulfate glucosamine 3-O-sulfotransferase 5 (Hs3st5) from Mus musculus (Mouse).